Reading from the N-terminus, the 325-residue chain is N-acetyl-gamma-glutamyl-phosphate reductase (325 aa).

The active site involves Cys135.

It belongs to the NAGSA dehydrogenase family. Type 1 subfamily.

The protein localises to the cytoplasm. The enzyme catalyses N-acetyl-L-glutamate 5-semialdehyde + phosphate + NADP(+) = N-acetyl-L-glutamyl 5-phosphate + NADPH + H(+). It participates in amino-acid biosynthesis; L-arginine biosynthesis; N(2)-acetyl-L-ornithine from L-glutamate: step 3/4. In terms of biological role, catalyzes the NADPH-dependent reduction of N-acetyl-5-glutamyl phosphate to yield N-acetyl-L-glutamate 5-semialdehyde. This Karelsulcia muelleri (strain GWSS) (Sulcia muelleri) protein is N-acetyl-gamma-glutamyl-phosphate reductase.